The chain runs to 502 residues: Probable cytochrome P450 28d1 (502 aa).

Residue C446 participates in heme binding.

This sequence belongs to the cytochrome P450 family. Heme serves as cofactor.

Its subcellular location is the endoplasmic reticulum membrane. The protein localises to the microsome membrane. Functionally, may be involved in the metabolism of insect hormones and in the breakdown of synthetic insecticides. The sequence is that of Probable cytochrome P450 28d1 (Cyp28d1) from Drosophila melanogaster (Fruit fly).